Consider the following 176-residue polypeptide: Pro-glucagon (176 aa).

The N-terminal stretch at 1–20 (MKSLYFVAGLLVMLAQGSWQ) is a signal peptide. The segment covering 25–35 (NTEEKSSSFPA) has biased composition (polar residues). Residues 25 to 59 (NTEEKSSSFPAPQTDPLGDPDQISEDKRHSQGTFT) form a disordered region. Serine 54 is modified (phosphoserine). The propeptide occupies 84–89 (NKNNIA). A phosphoserine mark is found at serine 105 and serine 108. The residue at position 127 (arginine 127) is an Arginine amide. The propeptide occupies 131–145 (DFPEEVNIVEELRRR). Serine 150 and serine 152 each carry phosphoserine.

It belongs to the glucagon family. In terms of processing, proglucagon is post-translationally processed in a tissue-specific manner in pancreatic A cells and intestinal L cells. In pancreatic A cells, the major bioactive hormone is glucagon cleaved by PCSK2/PC2. In the intestinal L cells PCSK1/PC1 liberates GLP-1, GLP-2, glicentin and oxyntomodulin. GLP-1 is further N-terminally truncated by post-translational processing in the intestinal L cells resulting in GLP-1(7-37) GLP-1-(7-36)amide. The C-terminal amidation is neither important for the metabolism of GLP-1 nor for its effects on the endocrine pancreas. Glucagon is secreted in the A cells of the islets of Langerhans. GLP-1, GLP-2, oxyntomodulin and glicentin are secreted from enteroendocrine cells throughout the gastrointestinal tract. GLP-1 and GLP-2 are also secreted in selected neurons in the brain.

It is found in the secreted. Functionally, plays a key role in glucose metabolism and homeostasis. Regulates blood glucose by increasing gluconeogenesis and decreasing glycolysis. A counterregulatory hormone of insulin, raises plasma glucose levels in response to insulin-induced hypoglycemia. Plays an important role in initiating and maintaining hyperglycemic conditions in diabetes. Potent stimulator of glucose-dependent insulin release. Also stimulates insulin release in response to IL6. Plays important roles on gastric motility and the suppression of plasma glucagon levels. May be involved in the suppression of satiety and stimulation of glucose disposal in peripheral tissues, independent of the actions of insulin. Has growth-promoting activities on intestinal epithelium. May also regulate the hypothalamic pituitary axis (HPA) via effects on LH, TSH, CRH, oxytocin, and vasopressin secretion. Increases islet mass through stimulation of islet neogenesis and pancreatic beta cell proliferation. Inhibits beta cell apoptosis. Its function is as follows. Stimulates intestinal growth and up-regulates villus height in the small intestine, concomitant with increased crypt cell proliferation and decreased enterocyte apoptosis. The gastrointestinal tract, from the stomach to the colon is the principal target for GLP-2 action. Plays a key role in nutrient homeostasis, enhancing nutrient assimilation through enhanced gastrointestinal function, as well as increasing nutrient disposal. Stimulates intestinal glucose transport and decreases mucosal permeability. In terms of biological role, significantly reduces food intake. Inhibits gastric emptying in humans. Suppression of gastric emptying may lead to increased gastric distension, which may contribute to satiety by causing a sensation of fullness. Functionally, may modulate gastric acid secretion and the gastro-pyloro-duodenal activity. May play an important role in intestinal mucosal growth in the early period of life. This is Pro-glucagon (GCG) from Ovis aries (Sheep).